Consider the following 94-residue polypeptide: Small ribosomal subunit protein uS19 (94 aa).

The protein belongs to the universal ribosomal protein uS19 family.

Functionally, protein S19 forms a complex with S13 that binds strongly to the 16S ribosomal RNA. The chain is Small ribosomal subunit protein uS19 from Clostridium novyi (strain NT).